The chain runs to 308 residues: Apolipoprotein F (308 aa).

The protein belongs to the apolipoprotein F family.

The protein localises to the secreted. Its function is as follows. Minor apolipoprotein that associates with LDL. Inhibits cholesteryl ester transfer protein (CETP) activity and appears to be an important regulator of cholesterol transport. Also associates to a lesser degree with VLDL, Apo-AI and Apo-AII. The sequence is that of Apolipoprotein F (Apof) from Rattus norvegicus (Rat).